The chain runs to 405 residues: Argininosuccinate synthase (405 aa).

ATP-binding positions include 10–18 (AYSGGLDTS) and Ala-37. L-citrulline is bound by residues Tyr-88 and Ser-93. An ATP-binding site is contributed by Gly-118. L-aspartate-binding residues include Thr-120, Asn-124, and Asp-125. L-citrulline is bound at residue Asn-124. L-citrulline contacts are provided by Arg-128, Ser-179, Ser-188, Glu-264, and Tyr-276.

The protein belongs to the argininosuccinate synthase family. Type 1 subfamily. As to quaternary structure, homotetramer.

The protein resides in the cytoplasm. The catalysed reaction is L-citrulline + L-aspartate + ATP = 2-(N(omega)-L-arginino)succinate + AMP + diphosphate + H(+). It functions in the pathway amino-acid biosynthesis; L-arginine biosynthesis; L-arginine from L-ornithine and carbamoyl phosphate: step 2/3. The polypeptide is Argininosuccinate synthase (Pseudomonas aeruginosa (strain LESB58)).